A 674-amino-acid chain; its full sequence is Carbon monoxide dehydrogenase/acetyl-CoA synthase subunit beta (674 aa).

The tract at residues 1–25 (MPRFRDLSHNCRPSEAPRVMEPKNR) is disordered. 6 residues coordinate [4Fe-4S] cluster: C59, C67, C68, C71, C76, and C90. H283, C317, C355, C470, C500, and C550 together coordinate [Ni-4Fe-4S] cluster.

As to quaternary structure, tetramer of two alpha and two beta chains. [Ni-Fe-S] cluster is required as a cofactor. [4Fe-4S] cluster serves as cofactor.

The catalysed reaction is CO + 2 oxidized [2Fe-2S]-[ferredoxin] + H2O = 2 reduced [2Fe-2S]-[ferredoxin] + CO2 + 2 H(+). The beta subunit (this protein) generates CO from CO(2), while the alpha subunit combines the CO with CoA and a methyl group to form acetyl-CoA. The methyl group, which is incorporated into acetyl-CoA, is transferred to the alpha subunit by a corrinoid iron-sulfur protein. The sequence is that of Carbon monoxide dehydrogenase/acetyl-CoA synthase subunit beta from Moorella thermoacetica (Clostridium thermoaceticum).